The following is a 331-amino-acid chain: Adenosine deaminase (331 aa).

Zn(2+) contacts are provided by His-12 and His-14. The substrate site is built by His-14 and Asp-16. Residue His-197 coordinates Zn(2+). Catalysis depends on Glu-200, which acts as the Proton donor. Asp-278 is a Zn(2+) binding site.

It belongs to the metallo-dependent hydrolases superfamily. Adenosine and AMP deaminases family. Adenosine deaminase subfamily. Requires Zn(2+) as cofactor.

The enzyme catalyses adenosine + H2O + H(+) = inosine + NH4(+). The catalysed reaction is 2'-deoxyadenosine + H2O + H(+) = 2'-deoxyinosine + NH4(+). Its function is as follows. Catalyzes the hydrolytic deamination of adenosine and 2-deoxyadenosine. The sequence is that of Adenosine deaminase from Shewanella halifaxensis (strain HAW-EB4).